Reading from the N-terminus, the 1280-residue chain is SET and MYND domain-containing protein DDB_G0284059 (1280 aa).

Disordered stretches follow at residues 1 to 35 (MTKK…SHNH) and 111 to 167 (INKI…QKQQ). Low complexity-rich tracts occupy residues 16 to 25 (NNNNNNNHGN) and 117 to 153 (ENSP…QSQP). TPR repeat units follow at residues 272-305 (SKGY…YDME) and 383-416 (HKLY…IEKR). The stretch at 439–468 (QKDEEIEQELDNKNNNSNDDEKQQQQQQQQ) forms a coiled coil. Residues cysteine 533, cysteine 536, cysteine 546, cysteine 549, cysteine 555, cysteine 559, histidine 568, and cysteine 572 each coordinate Zn(2+). The segment at 533-572 (CYNCFKEILSPIYCKECSNSQYCSNKCLNEDYVKQHGREC) adopts an MYND-type zinc-finger fold. Disordered regions lie at residues 601–642 (ANKG…QNLN), 659–726 (ALSS…TTTT), 854–905 (QQQQ…PFSP), and 1039–1079 (AKLQ…LNNN). Low complexity-rich tracts occupy residues 659-697 (ALSS…SLTE), 712-726 (SSSS…TTTT), 854-898 (QQQQ…QNPP), 1042-1053 (QQQQQQQQQHQQ), and 1061-1079 (NSNP…LNNN). One can recognise an SET domain in the interval 822–965 (CQLTTYTFAI…KGEEILGCYG (144 aa)). A TPR 3 repeat occupies 1218–1251 (GREYSKLGQIYLTLGEIEKSEDAIEKAESILMSW).

This sequence belongs to the class V-like SAM-binding methyltransferase superfamily.

Probable methyltransferase. The protein is SET and MYND domain-containing protein DDB_G0284059 of Dictyostelium discoideum (Social amoeba).